The primary structure comprises 262 residues: uncharacterized protein (262 aa).

This is an uncharacterized protein from Mycobacterium tuberculosis (strain CDC 1551 / Oshkosh).